A 117-amino-acid polypeptide reads, in one-letter code: DNA-directed RNA polymerase subunit omega (117 aa).

Belongs to the RNA polymerase subunit omega family. The RNAP catalytic core consists of 2 alpha, 1 beta, 1 beta' and 1 omega subunit. When a sigma factor is associated with the core the holoenzyme is formed, which can initiate transcription.

The catalysed reaction is RNA(n) + a ribonucleoside 5'-triphosphate = RNA(n+1) + diphosphate. In terms of biological role, promotes RNA polymerase assembly. Latches the N- and C-terminal regions of the beta' subunit thereby facilitating its interaction with the beta and alpha subunits. The chain is DNA-directed RNA polymerase subunit omega from Jannaschia sp. (strain CCS1).